The chain runs to 379 residues: Deoxyhypusine synthase (379 aa).

NAD(+)-binding positions include Ser108–Ser112, Thr134–Gly136, Glu140, and Asp257. Spermidine is bound at residue Glu139–Glu140. Asp262 contributes to the spermidine binding site. An NAD(+)-binding site is contributed by Gly304. His309 is a spermidine binding site. Residue Thr329–Gly330 coordinates NAD(+). Spermidine-binding positions include Gly335–Asp337 and Glu344–Lys350. Lys350 (nucleophile) is an active-site residue. Asp363–Ala364 contributes to the NAD(+) binding site.

Belongs to the deoxyhypusine synthase family. NAD(+) is required as a cofactor.

It carries out the reaction [eIF5A protein]-L-lysine + spermidine = [eIF5A protein]-deoxyhypusine + propane-1,3-diamine. It participates in protein modification; eIF5A hypusination. Catalyzes the NAD-dependent oxidative cleavage of spermidine and the subsequent transfer of the butylamine moiety of spermidine to the epsilon-amino group of a specific lysine residue of the eIF-5A precursor protein to form the intermediate deoxyhypusine residue. The polypeptide is Deoxyhypusine synthase (DYS1) (Kluyveromyces lactis (strain ATCC 8585 / CBS 2359 / DSM 70799 / NBRC 1267 / NRRL Y-1140 / WM37) (Yeast)).